Reading from the N-terminus, the 57-residue chain is UPF0337 protein SCO0678 (57 aa).

2 stretches are compositionally biased toward basic and acidic residues: residues 1 to 22 (MAGN…KEAA) and 42 to 57 (GDAR…VFRH). Residues 1-57 (MAGNEKSRAKMEQAKGKAKEAAGRAVGNERMTAEGRAAQSKGDARQAKEKGKDVFRH) are disordered.

Belongs to the UPF0337 (CsbD) family.

The sequence is that of UPF0337 protein SCO0678 from Streptomyces coelicolor (strain ATCC BAA-471 / A3(2) / M145).